We begin with the raw amino-acid sequence, 288 residues long: Mediator of RNA polymerase II transcription subunit 8 (288 aa).

Residues 4–58 (EELKQLELLRNRFAQLTSNLGSLRTSVSNSNPLPTYESLQASVNILQANIRSIQD) are a coiled coil. 3 disordered regions span residues 122-150 (GGVH…APQD), 191-245 (VRTG…GGGM), and 266-288 (PGNV…APPR). 2 stretches are compositionally biased toward acidic residues: residues 131–148 (DYDD…DDAP) and 200–221 (EESE…EDEA). Residues 180-228 (TAEERAAGIENVRTGLRQTLEESEDDDEDEEEEEEDEEEDEAAAAAGNA) adopt a coiled-coil conformation. Over residues 227-245 (NAGGLATGAGGSAAAGGGM) the composition is skewed to gly residues.

It belongs to the Mediator complex subunit 8 family. In terms of assembly, component of the Mediator complex.

The protein resides in the nucleus. In terms of biological role, component of the Mediator complex, a coactivator involved in the regulated transcription of nearly all RNA polymerase II-dependent genes. Mediator functions as a bridge to convey information from gene-specific regulatory proteins to the basal RNA polymerase II transcription machinery. Mediator is recruited to promoters by direct interactions with regulatory proteins and serves as a scaffold for the assembly of a functional preinitiation complex with RNA polymerase II and the general transcription factors. The sequence is that of Mediator of RNA polymerase II transcription subunit 8 (MED8) from Chaetomium globosum (strain ATCC 6205 / CBS 148.51 / DSM 1962 / NBRC 6347 / NRRL 1970) (Soil fungus).